We begin with the raw amino-acid sequence, 570 residues long: Sulfite reductase [NADPH] hemoprotein beta-component (570 aa).

Positions 434, 440, 479, and 483 each coordinate [4Fe-4S] cluster. A siroheme-binding site is contributed by C483.

This sequence belongs to the nitrite and sulfite reductase 4Fe-4S domain family. In terms of assembly, alpha(8)-beta(8). The alpha component is a flavoprotein, the beta component is a hemoprotein. Siroheme serves as cofactor. Requires [4Fe-4S] cluster as cofactor.

The catalysed reaction is hydrogen sulfide + 3 NADP(+) + 3 H2O = sulfite + 3 NADPH + 4 H(+). Its pathway is sulfur metabolism; hydrogen sulfide biosynthesis; hydrogen sulfide from sulfite (NADPH route): step 1/1. Its function is as follows. Component of the sulfite reductase complex that catalyzes the 6-electron reduction of sulfite to sulfide. This is one of several activities required for the biosynthesis of L-cysteine from sulfate. The sequence is that of Sulfite reductase [NADPH] hemoprotein beta-component from Salmonella paratyphi B (strain ATCC BAA-1250 / SPB7).